A 455-amino-acid polypeptide reads, in one-letter code: Bifunctional protein GlmU (455 aa).

A pyrophosphorylase region spans residues 1–227; the sequence is MGLSVIILAA…CEEVQGVNDR (227 aa). Residues 8-11, K22, Q73, 78-79, 100-102, G137, E152, N167, and N225 each bind UDP-N-acetyl-alpha-D-glucosamine; these read LAAG, GT, and YGD. A Mg(2+)-binding site is contributed by D102. A Mg(2+)-binding site is contributed by N225. A linker region spans residues 228–248; it reads WELTKLERYYQRLMAKKLSLA. Positions 249 to 455 are N-acetyltransferase; it reads GVTIIDPERF…KGWHRPTKKE (207 aa). 2 residues coordinate UDP-N-acetyl-alpha-D-glucosamine: R332 and K350. H362 acts as the Proton acceptor in catalysis. 2 residues coordinate UDP-N-acetyl-alpha-D-glucosamine: Y365 and N376. Acetyl-CoA-binding positions include A379, 385-386, S404, A422, and R439; that span reads NY.

The protein in the N-terminal section; belongs to the N-acetylglucosamine-1-phosphate uridyltransferase family. It in the C-terminal section; belongs to the transferase hexapeptide repeat family. Homotrimer. It depends on Mg(2+) as a cofactor.

Its subcellular location is the cytoplasm. The enzyme catalyses alpha-D-glucosamine 1-phosphate + acetyl-CoA = N-acetyl-alpha-D-glucosamine 1-phosphate + CoA + H(+). It carries out the reaction N-acetyl-alpha-D-glucosamine 1-phosphate + UTP + H(+) = UDP-N-acetyl-alpha-D-glucosamine + diphosphate. It participates in nucleotide-sugar biosynthesis; UDP-N-acetyl-alpha-D-glucosamine biosynthesis; N-acetyl-alpha-D-glucosamine 1-phosphate from alpha-D-glucosamine 6-phosphate (route II): step 2/2. The protein operates within nucleotide-sugar biosynthesis; UDP-N-acetyl-alpha-D-glucosamine biosynthesis; UDP-N-acetyl-alpha-D-glucosamine from N-acetyl-alpha-D-glucosamine 1-phosphate: step 1/1. Its pathway is bacterial outer membrane biogenesis; LPS lipid A biosynthesis. Catalyzes the last two sequential reactions in the de novo biosynthetic pathway for UDP-N-acetylglucosamine (UDP-GlcNAc). The C-terminal domain catalyzes the transfer of acetyl group from acetyl coenzyme A to glucosamine-1-phosphate (GlcN-1-P) to produce N-acetylglucosamine-1-phosphate (GlcNAc-1-P), which is converted into UDP-GlcNAc by the transfer of uridine 5-monophosphate (from uridine 5-triphosphate), a reaction catalyzed by the N-terminal domain. This Coxiella burnetii (strain RSA 493 / Nine Mile phase I) protein is Bifunctional protein GlmU.